Reading from the N-terminus, the 2763-residue chain is Large tegument protein deneddylase (2763 aa).

Positions 1–247 are deubiquitination activity; that stretch reads MDIIPPIAVT…CDTYFTDEQY (247 aa). A Peptidase C76 domain is found at 12 to 237; the sequence is AGVGSRNQFD…SSAVTLIYGS (226 aa). Catalysis depends on residues Cys32, Asp168, and His170. An interaction with inner tegument protein region spans residues 495–523; it reads LELFINLTILRLTGFVVENGTRTHHGATS. 8 tandem repeats follow at residues 2455-2457, 2458-2460, 2461-2463, 2464-2466, 2467-2469, 2470-2472, 2473-2475, and 2476-2478. The tract at residues 2455–2478 is 8 X 3 AA repeats of P-A/V-Q; the sequence is PVQPVQPAQPVQPAQPAQPVQPAQ. A disordered region spans residues 2630 to 2651; that stretch reads NYKTRQPSPNFPRDVHTWGVSS.

The protein belongs to the herpesviridae large tegument protein family. Interacts with host CUL1 and CUL4A; these interactions inhibit the E3 ligase activity of cullins. Interacts with inner tegument protein. Interacts with capsid vertex specific component CVC2. Interacts with the major capsid protein/MCP.

The protein resides in the virion tegument. The protein localises to the host cytoplasm. It is found in the host nucleus. The enzyme catalyses Thiol-dependent hydrolysis of ester, thioester, amide, peptide and isopeptide bonds formed by the C-terminal Gly of ubiquitin (a 76-residue protein attached to proteins as an intracellular targeting signal).. Large tegument protein that plays multiple roles in the viral cycle. During viral entry, remains associated with the capsid while most of the tegument is detached and participates in the capsid transport toward the host nucleus. Plays a role in the routing of the capsid at the nuclear pore complex and subsequent uncoating. Within the host nucleus, acts as a deneddylase and promotes the degradation of nuclear CRLs (cullin-RING ubiquitin ligases) and thereby stabilizes nuclear CRL substrates, while cytoplasmic CRLs remain unaffected. These modifications prevent host cell cycle S-phase progression and create a favorable environment allowing efficient viral genome replication. Participates later in the secondary envelopment of capsids. Indeed, plays a linker role for the association of the outer viral tegument to the capsids together with the inner tegument protein. The polypeptide is Large tegument protein deneddylase (Varicella-zoster virus (strain Oka vaccine) (HHV-3)).